A 376-amino-acid polypeptide reads, in one-letter code: C-type lectin domain family 4 member M (376 aa).

Residues Met1–Gly49 are Cytoplasmic-facing. The short motif at Leu14–Leu15 is the Endocytosis signal element. A helical; Signal-anchor for type II membrane protein membrane pass occupies residues Ala50 to Val70. Residues Gln71 to Glu376 are Extracellular-facing. Asn92 carries N-linked (GlcNAc...) asparagine glycosylation. Repeat copies occupy residues Lys108–Ser130, Lys131–Ser153, Lys154–Ser176, Lys177–Ser199, Lys200–Ser222, and Lys223–Cys245. Residues Lys108–Pro246 are 6 X approximate tandem repeats. Intrachain disulfides connect Cys242–Cys372, Cys245–Cys256, Cys273–Cys366, and Cys345–Cys358. The C-type lectin domain maps to Phe251–Lys367. Residues Glu336, Asn338, Ser340, Glu343, Asn354, and Asp355 each contribute to the Ca(2+) site. N-linked (GlcNAc...) asparagine glycosylation occurs at Asn338.

In terms of assembly, homotetramer.

It is found in the membrane. Probable pathogen-recognition receptor involved in peripheral immune surveillance in liver. May mediate the endocytosis of pathogens which are subsequently degraded in lysosomal compartments. Probably recognizes in a calcium-dependent manner high mannose N-linked oligosaccharides in a variety of pathogen antigens. Is a receptor for ICAM3, probably by binding to mannose-like carbohydrates. The polypeptide is C-type lectin domain family 4 member M (CLEC4M) (Gorilla gorilla gorilla (Western lowland gorilla)).